The primary structure comprises 500 residues: L-arabinose isomerase (500 aa).

Mn(2+) contacts are provided by glutamate 306, glutamate 333, histidine 350, and histidine 450.

It belongs to the arabinose isomerase family. As to quaternary structure, homohexamer. Requires Mn(2+) as cofactor.

The catalysed reaction is beta-L-arabinopyranose = L-ribulose. The protein operates within carbohydrate degradation; L-arabinose degradation via L-ribulose; D-xylulose 5-phosphate from L-arabinose (bacterial route): step 1/3. Its function is as follows. Catalyzes the conversion of L-arabinose to L-ribulose. In Escherichia coli O7:K1 (strain IAI39 / ExPEC), this protein is L-arabinose isomerase.